Reading from the N-terminus, the 100-residue chain is NADH-quinone oxidoreductase subunit K (100 aa).

The next 3 membrane-spanning stretches (helical) occupy residues Leu-4 to Ile-24, Leu-28 to Val-48, and Val-60 to Leu-80.

This sequence belongs to the complex I subunit 4L family. In terms of assembly, NDH-1 is composed of 13 different subunits. Subunits NuoA, H, J, K, L, M, N constitute the membrane sector of the complex.

Its subcellular location is the cell inner membrane. The catalysed reaction is a quinone + NADH + 5 H(+)(in) = a quinol + NAD(+) + 4 H(+)(out). Its function is as follows. NDH-1 shuttles electrons from NADH, via FMN and iron-sulfur (Fe-S) centers, to quinones in the respiratory chain. The immediate electron acceptor for the enzyme in this species is believed to be ubiquinone. Couples the redox reaction to proton translocation (for every two electrons transferred, four hydrogen ions are translocated across the cytoplasmic membrane), and thus conserves the redox energy in a proton gradient. In Citrobacter koseri (strain ATCC BAA-895 / CDC 4225-83 / SGSC4696), this protein is NADH-quinone oxidoreductase subunit K.